A 388-amino-acid chain; its full sequence is Norsolorinic acid reductase A (388 aa).

NADP(+) is bound at residue Asp-69. Tyr-74 acts as the Proton donor in catalysis. His-148 contributes to the substrate binding site. NADP(+) is bound by residues 178–179, Gln-204, 233–243, and 300–308; these read SD, GVLGRGQFRSA, and RKVEHLKEN.

It belongs to the aldo/keto reductase family. Aldo/keto reductase 2 subfamily.

It functions in the pathway mycotoxin biosynthesis; aflatoxin biosynthesis. Functionally, norsolorinic acid reductase; part of the gene cluster that mediates the biosynthesis of aflatoxins, a group of polyketide-derived furanocoumarins, and part of the most toxic and carcinogenic compounds among the known mycotoxins. The four major aflatoxins produced by A.parasiticus are aflatoxin B1 (AFB1), aflatoxin B2 (AFB2), aflatoxin G1 (AFG1) and aflatoxin G2 (AFG2). Within the aflatoxin pathway, the norsolorinic acid reductase aflE may play a role in the conversion of norsolorinic acid (NOR) to averantin (AVN). The biosynthesis of aflatoxins begins with the norsolorinic acid synthase aflC that combines a hexanoyl starter unit produced by the fatty acid synthase aflA/aflB and 7 malonyl-CoA extender units to synthesize the precursor NOR. The second step is the conversion of NOR to averantin and requires the norsolorinic acid ketoreductase aflD, which catalyzes the dehydration of norsolorinic acid to form (1'S)-averantin. The norsolorinic acid reductases aflE and aflF may also play a role in the conversion of NOR to AVN. The cytochrome P450 monooxygenase aflG then catalyzes the hydroxylation of AVN to 5'hydroxyaverantin (HAVN). The next step is performed by the 5'-hydroxyaverantin dehydrogenase aflH that transforms HAVN to 5'-oxoaverantin (OAVN) which is further converted to averufin (AVF) by aflK that plays a dual role in the pathway, as a 5'-oxoaverantin cyclase that mediates conversion of 5'-oxoaverantin, as well as a versicolorin B synthase in a later step in the pathway. The averufin oxidase aflI catalyzes the conversion of AVF to versiconal hemiacetal acetate (VHA). VHA is then the substrate for the versiconal hemiacetal acetate esterase aflJ to yield versiconal (VAL). Versicolorin B synthase aflK then converts VAL to versicolorin B (VERB) by closing the bisfuran ring of aflatoxin which is required for DNA-binding, thus giving to aflatoxin its activity as a mutagen. Then, the activity of the versicolorin B desaturase aflL leads to versicolorin A (VERA). A branch point starts from VERB since it can also be converted to dihydrodemethylsterigmatocystin (DMDHST), probably also by aflL, VERA being a precursor for aflatoxins B1 and G1, and DMDHST for aflatoxins B2 and G2. Next, the versicolorin reductase aflM and the cytochrome P450 monooxygenase aflN are involved in conversion of VERA to demethylsterigmatocystin (DMST). AflX and aflY seem also involved in this step, through probable aflX-mediated epoxide ring-opening step following versicolorin A oxidation and aflY-mediated Baeyer-Villiger oxidation required for the formation of the xanthone ring. The methyltransferase aflO then leads to the modification of DMST to sterigmatocystin (ST), and of DMDHST to dihydrosterigmatocystin (DHST). Both ST and DHST are then substrates of the O-methyltransferase aflP to yield O-methylsterigmatocystin (OMST) and dihydro-O-methylsterigmatocystin (DHOMST), respectively. Finally OMST is converted to aflatoxins B1 and G1, and DHOMST to aflatoxins B2 and G2, via the action of several enzymes including O-methylsterigmatocystin oxidoreductase aflQ, the cytochrome P450 monooxygenase aflU, but also the NADH-dependent flavin oxidoreductase nadA which is specifically required for the synthesis of AFG1. The protein is Norsolorinic acid reductase A of Aspergillus parasiticus (strain ATCC 56775 / NRRL 5862 / SRRC 143 / SU-1).